The primary structure comprises 163 residues: 2-amino-4-hydroxy-6-hydroxymethyldihydropteridine pyrophosphokinase (163 aa).

Belongs to the HPPK family.

The catalysed reaction is 6-hydroxymethyl-7,8-dihydropterin + ATP = (7,8-dihydropterin-6-yl)methyl diphosphate + AMP + H(+). Its pathway is cofactor biosynthesis; tetrahydrofolate biosynthesis; 2-amino-4-hydroxy-6-hydroxymethyl-7,8-dihydropteridine diphosphate from 7,8-dihydroneopterin triphosphate: step 4/4. Catalyzes the transfer of pyrophosphate from adenosine triphosphate (ATP) to 6-hydroxymethyl-7,8-dihydropterin, an enzymatic step in folate biosynthesis pathway. This Helicobacter pylori (strain ATCC 700392 / 26695) (Campylobacter pylori) protein is 2-amino-4-hydroxy-6-hydroxymethyldihydropteridine pyrophosphokinase (folK).